Consider the following 164-residue polypeptide: Phosphopantetheine adenylyltransferase (164 aa).

Ser-10 contacts substrate. ATP contacts are provided by residues 10–11 (SF) and His-18. Residues Lys-42, Thr-79, and Arg-93 each contribute to the substrate site. ATP-binding positions include 94 to 96 (GLR), Glu-104, and 129 to 135 (VRPITAS).

This sequence belongs to the bacterial CoaD family. As to quaternary structure, homohexamer. It depends on Mg(2+) as a cofactor.

The protein localises to the cytoplasm. The catalysed reaction is (R)-4'-phosphopantetheine + ATP + H(+) = 3'-dephospho-CoA + diphosphate. The protein operates within cofactor biosynthesis; coenzyme A biosynthesis; CoA from (R)-pantothenate: step 4/5. Reversibly transfers an adenylyl group from ATP to 4'-phosphopantetheine, yielding dephospho-CoA (dPCoA) and pyrophosphate. This Bradyrhizobium sp. (strain ORS 278) protein is Phosphopantetheine adenylyltransferase.